The chain runs to 764 residues: Zygote defective protein 12 (764 aa).

Over residues 1-20 the composition is skewed to polar residues; sequence MLDLTNQESDSSENGNSKYA. The disordered stretch occupies residues 1-33; the sequence is MLDLTNQESDSSENGNSKYADSTDGRGIGTSRR. Residues 1–236 are interaction with dli-1; that stretch reads MLDLTNQESD…ESSVITNGNG (236 aa). One can recognise a Calponin-homology (CH) domain in the interval 43–169; it reads RKDLADLVFW…VSLAFIGKTQ (127 aa). Coiled coils occupy residues 244–405 and 436–692; these read LSAN…HVKT and GLES…NRLI. A helical membrane pass occupies residues 732 to 752; it reads ALPWRFGISSMLIIFMVWFFI.

It belongs to the hook family. Homodimer. Interacts with the dynein subunit dli-1 via its N-terminus. May interact with microtubules.

Its subcellular location is the nucleus membrane. The protein resides in the cytoplasm. The protein localises to the cytoskeleton. It is found in the microtubule organizing center. It localises to the centrosome. Functionally, cytoskeletal linker protein, which is essential for attachment of the centrosome to the nucleus. Required for dynein localization to the nuclear envelope. The sequence is that of Zygote defective protein 12 (zyg-12) from Caenorhabditis briggsae.